Here is a 101-residue protein sequence, read N- to C-terminus: Urease subunit beta (101 aa).

This sequence belongs to the urease beta subunit family. Heterotrimer of UreA (gamma), UreB (beta) and UreC (alpha) subunits. Three heterotrimers associate to form the active enzyme.

The protein resides in the cytoplasm. It catalyses the reaction urea + 2 H2O + H(+) = hydrogencarbonate + 2 NH4(+). It participates in nitrogen metabolism; urea degradation; CO(2) and NH(3) from urea (urease route): step 1/1. The chain is Urease subunit beta from Granulibacter bethesdensis (strain ATCC BAA-1260 / CGDNIH1).